The primary structure comprises 311 residues: MPSTIEAIYIILIAGELTIGIWGNGFIVLVNCIDWLKRRDVSLIDIILISLAISRICLLCVISLDGFFILLFPGTYDINVLESIMDAVWTFANNSSLWFTSCLSIFYLLKIANISHPFFFWLKLKINKVILAILLGSFLISLIISFPINGXWYHLFKVSHEENITWAFKVSTIPGAFKQLTLNLGAMVPFMLCLISFFLLLFSLVRHTKQIQLHATGLRDPSTEAHMRAIKAVIIFLLLLIVYYPVFLVMTSSTLIPQGKLVLMIGDIVTVIFPSSHSFILIMGNSKLREAFLKMLRFVKGFLRRRKPFGP.

The Extracellular segment spans residues 1-9 (MPSTIEAIY). Residues 10–32 (IILIAGELTIGIWGNGFIVLVNC) traverse the membrane as a helical segment. Residues 33–52 (IDWLKRRDVSLIDIILISLA) lie on the Cytoplasmic side of the membrane. Residues 53 to 72 (ISRICLLCVISLDGFFILLF) traverse the membrane as a helical segment. Topologically, residues 73–86 (PGTYDINVLESIMD) are extracellular. A helical transmembrane segment spans residues 87–109 (AVWTFANNSSLWFTSCLSIFYLL). The Cytoplasmic portion of the chain corresponds to 110-128 (KIANISHPFFFWLKLKINK). A helical transmembrane segment spans residues 129-146 (VILAILLGSFLISLIISF). Topologically, residues 147–179 (PINGXWYHLFKVSHEENITWAFKVSTIPGAFKQ) are extracellular. N-linked (GlcNAc...) asparagine glycosylation is present at Asn163. A helical transmembrane segment spans residues 180-202 (LTLNLGAMVPFMLCLISFFLLLF). The Cytoplasmic portion of the chain corresponds to 203–233 (SLVRHTKQIQLHATGLRDPSTEAHMRAIKAV). A helical transmembrane segment spans residues 234-256 (IIFLLLLIVYYPVFLVMTSSTLI). The Extracellular portion of the chain corresponds to 257–260 (PQGK). The helical transmembrane segment at 261–283 (LVLMIGDIVTVIFPSSHSFILIM) threads the bilayer. The Cytoplasmic segment spans residues 284–311 (GNSKLREAFLKMLRFVKGFLRRRKPFGP).

It belongs to the G-protein coupled receptor T2R family.

Its subcellular location is the membrane. Its function is as follows. Gustducin-coupled receptor implicated in the perception of bitter compounds in the oral cavity and the gastrointestinal tract. Signals through PLCB2 and the calcium-regulated cation channel TRPM5. The protein is Taste receptor type 2 member 9 (TAS2R9) of Papio hamadryas (Hamadryas baboon).